The sequence spans 786 residues: Endonuclease MutS2 (786 aa).

Glycine 335 to threonine 342 contributes to the ATP binding site. In terms of domain architecture, Smr spans leucine 711–lysine 786.

This sequence belongs to the DNA mismatch repair MutS family. MutS2 subfamily. Homodimer. Binds to stalled ribosomes, contacting rRNA.

Functionally, endonuclease that is involved in the suppression of homologous recombination and thus may have a key role in the control of bacterial genetic diversity. Acts as a ribosome collision sensor, splitting the ribosome into its 2 subunits. Detects stalled/collided 70S ribosomes which it binds and splits by an ATP-hydrolysis driven conformational change. Acts upstream of the ribosome quality control system (RQC), a ribosome-associated complex that mediates the extraction of incompletely synthesized nascent chains from stalled ribosomes and their subsequent degradation. Probably generates substrates for RQC. The sequence is that of Endonuclease MutS2 from Bacillus thuringiensis (strain Al Hakam).